Here is a 208-residue protein sequence, read N- to C-terminus: Adenylyl-sulfate kinase (208 aa).

35 to 42 contributes to the ATP binding site; that stretch reads GLSGSGKS. Ser109 acts as the Phosphoserine intermediate in catalysis.

The protein belongs to the APS kinase family.

The enzyme catalyses adenosine 5'-phosphosulfate + ATP = 3'-phosphoadenylyl sulfate + ADP + H(+). Its pathway is sulfur metabolism; hydrogen sulfide biosynthesis; sulfite from sulfate: step 2/3. In terms of biological role, catalyzes the synthesis of activated sulfate. In Geotalea uraniireducens (strain Rf4) (Geobacter uraniireducens), this protein is Adenylyl-sulfate kinase.